The chain runs to 142 residues: Small ribosomal subunit protein bS6 (142 aa).

A compositionally biased stretch (basic and acidic residues) spans 110–133 (NKKPSHAKEKHEKTEHTHSHHTEE). A disordered region spans residues 110-142 (NKKPSHAKEKHEKTEHTHSHHTEEAESVGSHSE).

It belongs to the bacterial ribosomal protein bS6 family.

Binds together with bS18 to 16S ribosomal RNA. The protein is Small ribosomal subunit protein bS6 (rpsF) of Helicobacter pylori (strain ATCC 700392 / 26695) (Campylobacter pylori).